The primary structure comprises 33 residues: Kappa-theraphotoxin-Pg2a (33 aa).

Disulfide bonds link cysteine 2-cysteine 16, cysteine 9-cysteine 21, and cysteine 15-cysteine 28.

In terms of tissue distribution, expressed by the venom gland.

It is found in the secreted. In terms of biological role, gating modifier of Kv2.1/KCNB1 channels. The chain is Kappa-theraphotoxin-Pg2a from Chilobrachys guangxiensis (Chinese earth tiger tarantula).